A 207-amino-acid chain; its full sequence is Probable molybdenum cofactor guanylyltransferase (207 aa).

GTP is bound by residues 9–11 (LAG), lysine 21, and aspartate 97. Aspartate 97 serves as a coordination point for Mg(2+).

It belongs to the MobA family. Mg(2+) serves as cofactor.

The protein localises to the cytoplasm. It catalyses the reaction Mo-molybdopterin + GTP + H(+) = Mo-molybdopterin guanine dinucleotide + diphosphate. Its function is as follows. Transfers a GMP moiety from GTP to Mo-molybdopterin (Mo-MPT) cofactor (Moco or molybdenum cofactor) to form Mo-molybdopterin guanine dinucleotide (Mo-MGD) cofactor. This chain is Probable molybdenum cofactor guanylyltransferase, found in Nostoc sp. (strain PCC 7120 / SAG 25.82 / UTEX 2576).